The following is a 474-amino-acid chain: 3-isopropylmalate dehydratase large subunit (474 aa).

[4Fe-4S] cluster contacts are provided by Cys355, Cys415, and Cys418.

This sequence belongs to the aconitase/IPM isomerase family. LeuC type 1 subfamily. Heterodimer of LeuC and LeuD. [4Fe-4S] cluster serves as cofactor.

The catalysed reaction is (2R,3S)-3-isopropylmalate = (2S)-2-isopropylmalate. The protein operates within amino-acid biosynthesis; L-leucine biosynthesis; L-leucine from 3-methyl-2-oxobutanoate: step 2/4. Its function is as follows. Catalyzes the isomerization between 2-isopropylmalate and 3-isopropylmalate, via the formation of 2-isopropylmaleate. The chain is 3-isopropylmalate dehydratase large subunit from Shewanella oneidensis (strain ATCC 700550 / JCM 31522 / CIP 106686 / LMG 19005 / NCIMB 14063 / MR-1).